The primary structure comprises 640 residues: Threonine--tRNA ligase (640 aa).

One can recognise a TGS domain in the interval 1–61; that stretch reads MPIITLPDGN…EKDSEVNIIT (61 aa). Residues 242–533 are catalytic; the sequence is DHRRIAKQMS…LIEHYAGRMP (292 aa). 3 residues coordinate Zn(2+): Cys333, His384, and His510.

It belongs to the class-II aminoacyl-tRNA synthetase family. Homodimer. Zn(2+) is required as a cofactor.

The protein localises to the cytoplasm. It catalyses the reaction tRNA(Thr) + L-threonine + ATP = L-threonyl-tRNA(Thr) + AMP + diphosphate + H(+). Catalyzes the attachment of threonine to tRNA(Thr) in a two-step reaction: L-threonine is first activated by ATP to form Thr-AMP and then transferred to the acceptor end of tRNA(Thr). Also edits incorrectly charged L-seryl-tRNA(Thr). The sequence is that of Threonine--tRNA ligase from Prochlorococcus marinus (strain MIT 9303).